The primary structure comprises 170 residues: Small ribosomal subunit protein uS5 (170 aa).

Positions 12–75 (WSELLVSVRR…NAAKKSMIRV (64 aa)) constitute an S5 DRBM domain.

The protein belongs to the universal ribosomal protein uS5 family. As to quaternary structure, part of the 30S ribosomal subunit. Contacts proteins S4 and S8.

Its function is as follows. With S4 and S12 plays an important role in translational accuracy. In terms of biological role, located at the back of the 30S subunit body where it stabilizes the conformation of the head with respect to the body. The protein is Small ribosomal subunit protein uS5 of Wolbachia sp. subsp. Brugia malayi (strain TRS).